The primary structure comprises 315 residues: Ribosomal protein L11 methyltransferase (315 aa).

Positions 162, 183, 205, and 248 each coordinate S-adenosyl-L-methionine.

It belongs to the methyltransferase superfamily. PrmA family.

Its subcellular location is the cytoplasm. The catalysed reaction is L-lysyl-[protein] + 3 S-adenosyl-L-methionine = N(6),N(6),N(6)-trimethyl-L-lysyl-[protein] + 3 S-adenosyl-L-homocysteine + 3 H(+). Functionally, methylates ribosomal protein L11. This chain is Ribosomal protein L11 methyltransferase, found in Enterococcus faecalis (strain ATCC 700802 / V583).